The following is a 233-amino-acid chain: Synaptogyrin-4 (233 aa).

In terms of domain architecture, MARVEL spans Phe-18–Arg-169. 4 helical membrane passes run Ile-25–Gly-45, Cys-66–Ile-86, Leu-104–Leu-124, and Ala-145–Phe-165. Positions Ser-191–Ser-233 are disordered. The segment covering Gly-204–Met-219 has biased composition (polar residues).

It belongs to the synaptogyrin family.

The protein resides in the membrane. The sequence is that of Synaptogyrin-4 (Syngr4) from Mus musculus (Mouse).